The primary structure comprises 1698 residues: Protein 4.1 homolog (1698 aa).

Residues 1 to 31 (MPAEIKPSAPAEPETPTKSKPKSSSSSHGKP) form a disordered region. Low complexity predominate over residues 12–27 (EPETPTKSKPKSSSSS). The FERM domain maps to 32–314 (ALARVTLLDG…EHHTFFRLMT (283 aa)). Residues 317–434 (PVSKSKMFPV…KEEKERKERE (118 aa)) are hydrophilic. 2 disordered regions span residues 335-361 (GRTQAESTNTPVDRTPPKFNRTLSGAR) and 374-710 (EKEK…SDPT). Residues 374-448 (EKEKVARKSS…EEKKKAEKAA (75 aa)) are compositionally biased toward basic and acidic residues. Positions 449–461 (KAALAAGAAAGAA) are enriched in low complexity. A phosphoserine mark is found at S471, S474, and S478. Basic and acidic residues predominate over residues 499 to 514 (KDGKDKSGKDKDKEVG). Residues 562–571 (DGNTSPTRKS) are compositionally biased toward polar residues. S566 is modified (phosphoserine). Residues 579–589 (YDQDPNSRKSG) show a composition bias toward basic and acidic residues. A compositionally biased stretch (polar residues) spans 594 to 603 (EQLSPTSQQK). Residues 618 to 627 (ALKETAEKLK) show a composition bias toward basic and acidic residues. Residues S659 and S687 each carry the phosphoserine modification. Positions 684-696 (RSYSPTKGPQGYS) are enriched in polar residues. T689 is modified (phosphothreonine). Phosphoserine occurs at positions 697, 1398, 1401, and 1402. The segment at 1286-1698 (GEIVQVDPND…EKIEIQQQTQ (413 aa)) is C-terminal (CTD). At T1407 the chain carries Phosphothreonine. Over residues 1509-1532 (LGKNAKTEQLEEKTVATTRTHDPN) the composition is skewed to basic and acidic residues. Residues 1509–1599 (LGKNAKTEQL…SPLFTTSATT (91 aa)) form a disordered region. Over residues 1533-1554 (KQQQRVVTQEVKTTATVTSGDQ) the composition is skewed to polar residues. Low complexity predominate over residues 1561–1571 (VSSTSSGDSGT). Positions 1584 to 1599 (RTDNQKSPLFTTSATT) are enriched in polar residues. Phosphoserine is present on S1590.

As to expression, at onset of germ band retraction, expression is seen in epidermis, hindgut and foregut. During retraction, expression extends to tracheal branches and salivary glands.

The protein localises to the cell junction. It localises to the septate junction. In terms of biological role, an integral component of the septate junction. May play a role in cell-cell interactions that are necessary for proper development. Vital for embryonic development. The polypeptide is Protein 4.1 homolog (cora) (Drosophila melanogaster (Fruit fly)).